Consider the following 357-residue polypeptide: Protein RecA (357 aa).

67–74 is an ATP binding site; the sequence is GPESSGKT. Residues 332–357 are disordered; sequence PSAMSSSSSDDENSEGNVDFETGEVF.

This sequence belongs to the RecA family.

It localises to the cytoplasm. Can catalyze the hydrolysis of ATP in the presence of single-stranded DNA, the ATP-dependent uptake of single-stranded DNA by duplex DNA, and the ATP-dependent hybridization of homologous single-stranded DNAs. It interacts with LexA causing its activation and leading to its autocatalytic cleavage. The sequence is that of Protein RecA from Shewanella sp. (strain ANA-3).